A 239-amino-acid polypeptide reads, in one-letter code: Ribonuclease 3 (239 aa).

Positions 12 to 137 (RAKLEALIGH…LIAAIYLDGG (126 aa)) constitute an RNase III domain. Glu-50 serves as a coordination point for Mg(2+). Residue Asp-54 is part of the active site. 2 residues coordinate Mg(2+): Asp-123 and Glu-126. Glu-126 is an active-site residue. The DRBM domain occupies 162-231 (DAKTELQEWS…ATKMLEREGI (70 aa)).

It belongs to the ribonuclease III family. Homodimer. Mg(2+) serves as cofactor.

It is found in the cytoplasm. The catalysed reaction is Endonucleolytic cleavage to 5'-phosphomonoester.. Functionally, digests double-stranded RNA. Involved in the processing of primary rRNA transcript to yield the immediate precursors to the large and small rRNAs (23S and 16S). Processes some mRNAs, and tRNAs when they are encoded in the rRNA operon. Processes pre-crRNA and tracrRNA of type II CRISPR loci if present in the organism. This Rhizobium etli (strain ATCC 51251 / DSM 11541 / JCM 21823 / NBRC 15573 / CFN 42) protein is Ribonuclease 3.